The chain runs to 141 residues: Hemoglobin subunit alpha-1 (141 aa).

One can recognise a Globin domain in the interval 1 to 141; the sequence is VLTEDDKNHI…VAKTLVAHYR (141 aa). An O2-binding site is contributed by His58. Residue His87 coordinates heme b.

The protein belongs to the globin family. In terms of assembly, heterotetramer of two alpha chains and two beta chains. Red blood cells.

Functionally, involved in oxygen transport from the lung to the various peripheral tissues. This is Hemoglobin subunit alpha-1 from Iguana iguana (Common iguana).